The sequence spans 241 residues: Probable transcriptional regulatory protein lmo1535 (241 aa).

A compositionally biased stretch (polar residues) spans 1–14 (MSGHSKWNNIQGRK). The interval 1-22 (MSGHSKWNNIQGRKNAQDSKRS) is disordered.

This sequence belongs to the TACO1 family.

Its subcellular location is the cytoplasm. The sequence is that of Probable transcriptional regulatory protein lmo1535 from Listeria monocytogenes serovar 1/2a (strain ATCC BAA-679 / EGD-e).